Here is a 358-residue protein sequence, read N- to C-terminus: Reverse gyrase subunit A (358 aa).

In terms of domain architecture, Topo IA-type catalytic spans 1–351 (MNATLRIRNR…KLYLELERVV (351 aa)). The O-(5'-phospho-DNA)-tyrosine intermediate role is filled by Tyr78.

It belongs to the type IA topoisomerase family. Heterodimer of an RgyrA and RgyrB subunit. The topoisomerase domain is shared between the two subunits. Requires Mg(2+) as cofactor.

It is found in the cytoplasm. In terms of biological role, modifies the topological state of DNA by introducing positive supercoils in an ATP-dependent process; dATP also allows positive supercoiling. Increases the linking number in steps of +1. Only this subunit binds DNA, in isolation it does not hydrolyze ATP. Hydrolyzes ATP only in the presence of DNA. Transiently cleaves a single DNA strand and remains covalently bound to the 5' DNA end probably through a tyrosine residue. It changes linking number in steps of one, and nicks DNA preferentially at 5'-CNNN | 3'-sites with a strong preference for 4 pyrimidine residues. There are about 1000 heterodimers per cell. May be involved in rewinding the DNA strands in the regions of the chromosome that have opened up to allow transcription or replication. Its function is as follows. Reverse gyrase activity is reconstituted after incubation at 80 degrees Celsius for 5 minutes, positive supercoiling requires ATP and Mg(2+). In the presence of ATP it binds and nicks substrate but does not make closed product. This is Reverse gyrase subunit A from Methanopyrus kandleri (strain AV19 / DSM 6324 / JCM 9639 / NBRC 100938).